The sequence spans 335 residues: Phosphate acyltransferase (335 aa).

This sequence belongs to the PlsX family. Homodimer. Probably interacts with PlsY.

The protein localises to the cytoplasm. The catalysed reaction is a fatty acyl-[ACP] + phosphate = an acyl phosphate + holo-[ACP]. The protein operates within lipid metabolism; phospholipid metabolism. Functionally, catalyzes the reversible formation of acyl-phosphate (acyl-PO(4)) from acyl-[acyl-carrier-protein] (acyl-ACP). This enzyme utilizes acyl-ACP as fatty acyl donor, but not acyl-CoA. This is Phosphate acyltransferase from Streptococcus equi subsp. zooepidemicus (strain H70).